The primary structure comprises 8799 residues: Nesprin-1 (8799 aa).

An actin-binding region spans residues 1-289 (MATSRASSRS…TQYPDIHGAG (289 aa)). The Cytoplasmic portion of the chain corresponds to 1–8748 (MATSRASSRS…GRAFLFRILR (8748 aa)). 2 consecutive Calponin-homology (CH) domains span residues 27-134 (IVQK…LYFQ) and 178-283 (GNAK…TQYP). Spectrin repeat units follow at residues 314–397 (RDDR…SRLF), 398–502 (DWHI…HLMK), 503–609 (MEFL…SMLE), 610–703 (EVIS…YARA), 704–815 (DEMD…QLTV), 816–923 (PLEE…KHVE), 924–1024 (ANSR…HLKI), 1025–1122 (AVEK…LVDD), 1123–1246 (PDKW…SSLE), 1247–1333 (GLIS…ERRI), 1334–1442 (QVSL…MEMV), 1443–1548 (KSKW…ILGH), 1549–1651 (LSQQ…LEDL), 1652–1761 (LARW…LQSV), 1762–1877 (LAEH…SHAC), 1878–1974 (MSTL…ADAL), 1975–2079 (VALK…QGQC), 2080–2193 (CGLI…LRVS), 2194–2301 (LSIW…KDFT), 2302–2399 (AQRT…QTQA), 2400–2511 (RIQD…LQDC), 2512–2617 (VSEL…LRSC), 2618–2729 (QLAL…LESV), 2730–2836 (IDQW…VEDL), 2837–2960 (VKDH…FGQV), 2961–3060 (TQLE…QNKE), 3061–3169 (QILQ…LENL), 3170–3273 (KIQM…VSRL), 3274–3385 (DRII…LEGA), 3386–3488 (LSKW…LEKL), 3489–3591 (VRLH…RMQL), 3592–3718 (NNVV…YSDW), 3719–3812 (YGST…LEKG), 3813–3918 (LHLA…LEAK), 3919–4026 (VKDH…QRVY), 4027–4137 (RSLE…KSLK), 4138–4233 (AELW…REQD), 4234–4337 (LQRT…IQVS), 4338–4449 (VTNL…LNKA), 4450–4558 (LSEK…LEKS), 4559–4667 (LVSR…TQEA), 4668–4774 (ILAR…LEDT), 4775–4880 (TSVY…CESR), 4881–4989 (MVQS…LTEI), 4990–5097 (YSRC…LQRC), 5098–5207 (MVQW…LEDA), 5208–5316 (VDEW…GKLV), 5317–5422 (KQEL…EEGK), 5423–5520 (AMSQ…LSKL), 5521–5628 (NQAL…LQDA), 5629–5745 (AKDM…PKEA), and 5746–5851 (VVQY…PSAH). A coiled-coil region spans residues 314–8666 (RDDRLILKET…DLEKLLDMSS (8353 aa)). K377 is modified (phosphoserine). At S732 the chain carries Phosphoserine. Positions 1288 to 1310 (KKRDLQEQMEQAQQGGQAGPGQE) are disordered. At T2268 the chain carries Phosphothreonine. S5655 is subject to Phosphoserine. A disordered region spans residues 5868 to 5894 (PVTEESGEEGTNSEISSPPACRSPSPV). Spectrin repeat units lie at residues 5971–6080 (LERQ…LEEK), 6081–6187 (LSDQ…SLGE), 6377–6488 (RQSI…RLQQ), 6489–6584 (ILRF…RSSL), 6585–6694 (HQNL…LEMW), 6695–6798 (SHLD…TILK), 6799–6905 (HWTR…QEKL), 6906–7023 (HQLQ…LEGL), 7024–7131 (LESW…LTSA), 7132–7240 (LGQW…SKAL), 7241–7353 (LQLW…LQAG), 7354–7457 (VVDY…LQSF), 7458–7561 (LLQH…RGII), 7562–7674 (DSQI…LAFL), 7675–7786 (LKDW…NEWA), 7787–7886 (VFSE…LKET), 7887–8000 (LVAV…IEET), 8001–8109 (WRLW…LKHF), and 8110–8221 (ISQR…VRLP). Phosphoserine is present on residues D8225 and S8227. The interval 8237-8287 (TALSDLRWQDPSADGMPSPQPSSNPSLSLPQPLRSERSGRDTPASVDSIPL) is disordered. The span at 8257-8269 (PSSNPSLSLPQPL) shows a compositional bias: low complexity. T8278 bears the Phosphothreonine mark. Phosphoserine is present on residues S8281, S8284, and S8308. Spectrin repeat units lie at residues 8332–8440 (SSLE…MKQN), 8441–8550 (LQKW…LQDA), and 8551–8668 (LMQC…SSSQ). The residue at position 8363 (T8363) is a Phosphothreonine. The segment at 8673–8735 (SWSSADELDT…SDSSRSDPRP (63 aa)) is disordered. 2 stretches are compositionally biased toward polar residues: residues 8682 to 8698 (TSGS…PNRQ) and 8706 to 8718 (SLSQ…SSPK). Positions 8721-8735 (STRDGSDSSRSDPRP) are enriched in basic and acidic residues. Residues 8740 to 8799 (RAFLFRILRAALPFQLLLLLLIGLTCLVPMSEKDYSCALSNNFARSFHPMLRYTNGPPPL) form the KASH domain. A helical; Anchor for type IV membrane protein membrane pass occupies residues 8749 to 8769 (AALPFQLLLLLLIGLTCLVPM). Residues 8770–8799 (SEKDYSCALSNNFARSFHPMLRYTNGPPPL) lie on the Perinuclear space side of the membrane.

It belongs to the nesprin family. Core component of LINC complexes which are composed of inner nuclear membrane SUN domain-containing proteins coupled to outer nuclear membrane KASH domain-containing nesprins. SUN and KASH domain-containing proteins seem to bind each other promiscuously; however, differentially expression of LINC complex constituents can give rise to specific assemblies. At least SUN1/2-containing core LINC complexes are proposed to be hexameric composed of three protomers of each KASH and SUN domain-containing protein. The SUN2:SYNE1/KASH1 LINC complex is a heterohexamer; the homotrimeric cloverleave-like conformation of the SUN domain is a prerequisite for LINC complex formation in which three separate SYNE1/KASH1 peptides bind at the interface of adjacent SUN domains. Self-associates. Interacts with SYNE3. Interacts with SUN3; proposed to form a spermatogenesis-specific LINC complex with SUN3 during sperm head formation. May interact with MUSK. Interacts with SPAG4/SUN4. Interacts with EMD and LMNA in vitro. Interacts with F-actin via its N-terminal domain. Interacts with DCTN1 and DYNC1I1/2; suggesting the association with the dynein-dynactin motor complex. Interacts (via KASH domain) with TMEM258. In terms of processing, the disulfid bond with SUN1 or SUN2 is required for stability of the respective LINC complex under tensile forces. Expressed in C2F3 and CH310T1/2 cells, brain and skeletal muscle (at protein level).

It localises to the nucleus outer membrane. Its subcellular location is the nucleus. The protein localises to the nucleus envelope. The protein resides in the cytoplasm. It is found in the cytoskeleton. It localises to the myofibril. Its subcellular location is the sarcomere. Functionally, multi-isomeric modular protein which forms a linking network between organelles and the actin cytoskeleton to maintain the subcellular spatial organization. As a component of the LINC (LInker of Nucleoskeleton and Cytoskeleton) complex involved in the connection between the nuclear lamina and the cytoskeleton. The nucleocytoplasmic interactions established by the LINC complex play an important role in the transmission of mechanical forces across the nuclear envelope and in nuclear movement and positioning. May be involved in nucleus-centrosome attachment. During interkinetic nuclear migration (INM) at G2 phase and nuclear migration in neural progenitors its LINC complex association with SUN1/2 and probably association with cytoplasmic dynein-dynactin motor complexes functions to pull the nucleus toward the centrosome; SYNE1 and SYNE2 seem to act redundantly in cerebellum, midbrain, brain stem, and other brain regions except cerebral cortex and hippocampus. Required for centrosome migration to the apical cell surface during early ciliogenesis. May be involved in nuclear remodeling during sperm head formation in spermatogenesis; a probable SUN3:SYNE1/KASH1 LINC complex may tether spermatid nuclei to posterior cytoskeletal structures such as the manchette. The protein is Nesprin-1 of Mus musculus (Mouse).